Here is a 185-residue protein sequence, read N- to C-terminus: dCTP deaminase (185 aa).

DCTP contacts are provided by residues 107 to 112 (KSTYAR), 131 to 133 (TLE), Gln-152, Tyr-166, and Gln-176. Glu-133 serves as the catalytic Proton donor/acceptor.

It belongs to the dCTP deaminase family. Homotrimer.

It carries out the reaction dCTP + H2O + H(+) = dUTP + NH4(+). It participates in pyrimidine metabolism; dUMP biosynthesis; dUMP from dCTP (dUTP route): step 1/2. In terms of biological role, catalyzes the deamination of dCTP to dUTP. In Wolbachia pipientis wMel, this protein is dCTP deaminase.